The chain runs to 691 residues: 1,4-alpha-glucan-branching enzyme (691 aa).

(1,4-alpha-D-glucosyl)n contacts are provided by tryptophan 80 and lysine 116. Aspartate 333 serves as the catalytic Nucleophile. Glutamate 398 (proton donor) is an active-site residue.

The protein belongs to the glycosyl hydrolase 13 family. GlgB subfamily.

It localises to the cytoplasm. It catalyses the reaction Transfers a segment of a (1-&gt;4)-alpha-D-glucan chain to a primary hydroxy group in a similar glucan chain.. It participates in glycan biosynthesis; glycogen biosynthesis. Its function is as follows. Glycogen-branching enzyme participates in the glycogen biosynthetic process along with glycogenin and glycogen synthase. Generates alpha-1,6-glucosidic branches from alpha-1,4-linked glucose chains, to increase solubility of the glycogen polymer. This is 1,4-alpha-glucan-branching enzyme (GLC3) from Yarrowia lipolytica (strain CLIB 122 / E 150) (Yeast).